The chain runs to 589 residues: Serine/threonine-protein kinase STE7 homolog (589 aa).

A compositionally biased stretch (basic and acidic residues) spans 1–18; it reads MTRTTRIDTQEATKHKDL. 2 disordered regions span residues 1–162 and 185–232; these read MTRT…DPDN and RQHY…PASS. The span at 24-33 shows a compositional bias: low complexity; that stretch reads PLSLSSNPNP. Polar residues predominate over residues 57 to 69; it reads VKSTSGSLRSSDM. The span at 92 to 121 shows a compositional bias: low complexity; that stretch reads PTASSSATSTPTSNITGSSSASSIQFAQKS. Polar residues-rich tracts occupy residues 127 to 136 and 144 to 162; these read IVSQTLSRPS and SGYSSLNVNQSNRNVDPDN. Residues 185–203 show a composition bias toward basic residues; that stretch reads RQHYQNSHHHLPTTNRKRQ. Residues 206-220 are compositionally biased toward low complexity; sequence ISSISPTKSSAASSP. Residues 249 to 565 form the Protein kinase domain; sequence LLTLKQLGSG…QLLEDKEHFF (317 aa). ATP is bound by residues 255–263 and K278; that span reads LGSGNSGSV. Catalysis depends on D374, which acts as the Proton acceptor. Position 402 is a phosphoserine (S402). At T408 the chain carries Phosphothreonine. Residues 473 to 499 form a disordered region; it reads IAAERNGQNSPSRSRKNKQKGNGYNSY.

Belongs to the protein kinase superfamily. STE Ser/Thr protein kinase family. MAP kinase kinase subfamily.

The catalysed reaction is L-seryl-[protein] + ATP = O-phospho-L-seryl-[protein] + ADP + H(+). The enzyme catalyses L-threonyl-[protein] + ATP = O-phospho-L-threonyl-[protein] + ADP + H(+). It carries out the reaction L-tyrosyl-[protein] + ATP = O-phospho-L-tyrosyl-[protein] + ADP + H(+). The polypeptide is Serine/threonine-protein kinase STE7 homolog (HST7) (Candida albicans (strain WO-1) (Yeast)).